The chain runs to 521 residues: MSL complex subunit 3 (521 aa).

The Tudor-knot domain maps to 13–71; sequence SGEKVLCFEPDPTKARVLYDAKIVDVIVGKDEKGRKIPEYLIHFNGWNRSWDRWAAEDH. Disordered stretches follow at residues 114–166 and 298–409; these read KGLP…TRRE and ATST…PSKE. A compositionally biased stretch (acidic residues) spans 139–149; that stretch reads KDEEISEESDI. Residues 150–166 are compositionally biased toward basic and acidic residues; the sequence is EEKTEVKEEPELQTRRE. Residues 168-517 form the MRG domain; it reads EERTITIEIP…CEAHYSTKNP (350 aa). The required for the histone acetyltransferase activity of the MSL complex stretch occupies residues 290 to 440; the sequence is FFLPIKESAT…WKLVPDNYPP (151 aa). 2 positions are modified to phosphoserine: Ser-309 and Ser-311. Positions 316–329 are enriched in low complexity; the sequence is NPSTPQSTESQPTT. Ser-367 and Ser-400 each carry phosphoserine. A Phosphothreonine modification is found at Thr-405. Residues Ser-407 and Ser-411 each carry the phosphoserine modification.

As to quaternary structure, component of the MSL histone acetyltransferase complex at least composed of the KAT8/MOF, MSL1/hampin, MSL2 and MSL3. Interacts (via the MRG domain) with MSL1 and KAT8/MOF. As to expression, expressed in many tissues including liver, pancreas, heart, lung, kidney, skeletal muscle, brain, and placenta, with highest expression in skeletal muscle and heart.

Its subcellular location is the nucleus. Its function is as follows. Non-catalytic component of the MSL histone acetyltransferase complex, a multiprotein complex that mediates the majority of histone H4 acetylation at 'Lys-16' (H4K16ac), an epigenetic mark that prevents chromatin compaction. The MSL complex is required for chromosome stability and genome integrity by maintaining homeostatic levels of H4K16ac. The MSL complex is also involved in gene dosage by promoting up-regulation of genes expressed by the X chromosome. X up-regulation is required to compensate for autosomal biallelic expression. The MSL complex also participates in gene dosage compensation by promoting expression of Tsix non-coding RNA. Acts as a histone reader that specifically recognizes and binds histone H4 monomethylated at 'Lys-20' (H4K20Me1) in a DNA-dependent manner and is proposed to be involved in chromosomal targeting of the MSL complex. May play a role X inactivation in females. This Homo sapiens (Human) protein is MSL complex subunit 3.